Consider the following 284-residue polypeptide: MQNLTATLLVSCPDQPGIVAQIAQFIYQNQGNIIHADQHTDFSSGLFLNRVEWQLDNFRLSRPELLSAWSQLAEQLQATWQIHFSDQLPRLALWVSKQDHCLLDILWRWRSGELRCEIPLIISNHPDLKSIADQFGIDFHCLPITKENKLAQETAELALLKQYQIDLVVLAKYLQILTTDFVVQFPNIINIHHSFLPAFPGANPYHRAHERGVKIIGATAHYATAQLDEGPIIEQDVVRVSHRDNVDDLIRKGRDLERVVLARAVRLHLQHRILVYDNRTVVFA.

The region spanning 7–90 is the ACT domain; the sequence is TLLVSCPDQP…QIHFSDQLPR (84 aa). Asp-228 is an active-site residue.

It belongs to the PurU family.

It catalyses the reaction (6R)-10-formyltetrahydrofolate + H2O = (6S)-5,6,7,8-tetrahydrofolate + formate + H(+). It functions in the pathway purine metabolism; IMP biosynthesis via de novo pathway; formate from 10-formyl-5,6,7,8-tetrahydrofolate: step 1/1. In terms of biological role, catalyzes the hydrolysis of 10-formyltetrahydrofolate (formyl-FH4) to formate and tetrahydrofolate (FH4). The polypeptide is Formyltetrahydrofolate deformylase (Synechocystis sp. (strain ATCC 27184 / PCC 6803 / Kazusa)).